We begin with the raw amino-acid sequence, 60 residues long: UPF0434 protein NMA0874 (60 aa).

Belongs to the UPF0434 family.

This chain is UPF0434 protein NMA0874, found in Neisseria meningitidis serogroup A / serotype 4A (strain DSM 15465 / Z2491).